Reading from the N-terminus, the 159-residue chain is Nucleotide-binding protein PSPPH_4093 (159 aa).

It belongs to the YajQ family.

Functionally, nucleotide-binding protein. The sequence is that of Nucleotide-binding protein PSPPH_4093 from Pseudomonas savastanoi pv. phaseolicola (strain 1448A / Race 6) (Pseudomonas syringae pv. phaseolicola (strain 1448A / Race 6)).